A 164-amino-acid polypeptide reads, in one-letter code: Ribosome maturation factor RimP (164 aa).

The protein belongs to the RimP family.

It localises to the cytoplasm. Its function is as follows. Required for maturation of 30S ribosomal subunits. This Mycoplasma mycoides subsp. mycoides SC (strain CCUG 32753 / NCTC 10114 / PG1) protein is Ribosome maturation factor RimP.